Here is a 356-residue protein sequence, read N- to C-terminus: Probable neutral protease 2 homolog TRV_06370 (356 aa).

Residues 1-17 form the signal peptide; that stretch reads MQFTALLAALGAPLALA. A propeptide spanning residues 18 to 183 is cleaved from the precursor; that stretch reads ASIPAAAHNH…DDSTGVIDKR (166 aa). 2 cysteine pairs are disulfide-bonded: cysteine 191–cysteine 262 and cysteine 269–cysteine 287. Histidine 311 provides a ligand contact to Zn(2+). Glutamate 312 is an active-site residue. Residues histidine 315 and aspartate 326 each contribute to the Zn(2+) site.

The protein belongs to the peptidase M35 family. Zn(2+) serves as cofactor.

It is found in the secreted. The catalysed reaction is Preferential cleavage of bonds with hydrophobic residues in P1'. Also 3-Asn-|-Gln-4 and 8-Gly-|-Ser-9 bonds in insulin B chain.. Functionally, probable secreted metalloprotease that shows high activities on basic nuclear substrates such as histone and protamine. May be involved in virulence. The chain is Probable neutral protease 2 homolog TRV_06370 from Trichophyton verrucosum (strain HKI 0517).